The sequence spans 440 residues: Replication factor C large subunit (440 aa).

48–55 (GPPGVGKT) is an ATP binding site.

Belongs to the activator 1 small subunits family. RfcL subfamily. In terms of assembly, heteromultimer composed of small subunits (RfcS) and large subunits (RfcL).

Part of the RFC clamp loader complex which loads the PCNA sliding clamp onto DNA. The protein is Replication factor C large subunit of Sulfurisphaera tokodaii (strain DSM 16993 / JCM 10545 / NBRC 100140 / 7) (Sulfolobus tokodaii).